The primary structure comprises 109 residues: Aquaporin-2 (109 aa).

The Cytoplasmic portion of the chain corresponds to 1–6; sequence SIAFSR. A helical membrane pass occupies residues 7 to 27; that stretch reads AVFSEFLATLLFVFFGLGSAL. The Extracellular portion of the chain corresponds to 28-35; the sequence is NWPQALPS. Residues 36–54 form a helical membrane-spanning segment; that stretch reads VLQIAMAFGLAIGTLVQTL. Residues 55-59 are Cytoplasmic-facing; that stretch reads GHISG. The discontinuously helical intramembrane region spans 60-69; it reads AHINPAVTVA. Positions 63–65 match the NPA 1 motif; the sequence is NPA. At 70–80 the chain is on the cytoplasmic side; the sequence is CLVGCHVSFLR. A helical transmembrane segment spans residues 81-102; the sequence is ATFYLAAQLLGAVAGAALLHEL. The Extracellular portion of the chain corresponds to 103–109; sequence TPPDIRG.

Belongs to the MIP/aquaporin (TC 1.A.8) family. Homotetramer. Serine phosphorylation is necessary and sufficient for expression at the apical membrane. Endocytosis is not phosphorylation-dependent. In terms of processing, N-glycosylated.

It is found in the apical cell membrane. Its subcellular location is the basolateral cell membrane. The protein resides in the cell membrane. It localises to the cytoplasmic vesicle membrane. The protein localises to the golgi apparatus. It is found in the trans-Golgi network membrane. The catalysed reaction is H2O(in) = H2O(out). It catalyses the reaction glycerol(in) = glycerol(out). Its function is as follows. Forms a water-specific channel that provides the plasma membranes of renal collecting duct with high permeability to water, thereby permitting water to move in the direction of an osmotic gradient. Plays an essential role in renal water homeostasis. Could also be permeable to glycerol. This Elephas maximus (Indian elephant) protein is Aquaporin-2.